The primary structure comprises 363 residues: Histone-lysine N-methyltransferase ASHH3 (363 aa).

The AWS domain maps to 63 to 114 (DDGIFCSCSSSSPGSSSTVCGSNCHCGMLFSSCSSSCKCGSECNNKPFQQRH). In terms of domain architecture, SET spans 116 to 233 (KKMKLIQTEK…KGEHLTYDYQ (118 aa)). A Post-SET domain is found at 239 to 255 (ADQDCHCGAVGCRRKLG).

Belongs to the class V-like SAM-binding methyltransferase superfamily. Histone-lysine methyltransferase family. SET2 subfamily.

It localises to the nucleus. Its subcellular location is the chromosome. It is found in the centromere. It catalyses the reaction L-lysyl-[histone] + S-adenosyl-L-methionine = N(6)-methyl-L-lysyl-[histone] + S-adenosyl-L-homocysteine + H(+). Its function is as follows. Histone methyltransferase. The polypeptide is Histone-lysine N-methyltransferase ASHH3 (ASHH3) (Arabidopsis thaliana (Mouse-ear cress)).